A 99-amino-acid polypeptide reads, in one-letter code: Small ribosomal subunit protein bS20 (99 aa).

Belongs to the bacterial ribosomal protein bS20 family.

Binds directly to 16S ribosomal RNA. The sequence is that of Small ribosomal subunit protein bS20 from Thermotoga neapolitana (strain ATCC 49049 / DSM 4359 / NBRC 107923 / NS-E).